The primary structure comprises 376 residues: MGGGDLNMKKSWHPLLMRNQEKVWKDEQAHKEEMKRVEQLRREIEEERQLLELHRLQEAAGGKKRKDRVEWMYAVPNTNGPNRDSSEMEEYLLGRRRLDDLLKDKIEDQNNSLEKTEFIALQNANSLQDTQAKLRLDPLLAIKQQEQKQLQTLMEKRKYSLDSDRKSKERRHRDRHHRSNQDRSRERSDNEQHSSDKREHSRRSYRNDRNNWRERTHNDRYRHRDKYDSGYFKKHYDDDMRFDQGHFQDERDLKKYVRTSRQYSRSPSPDFRTRNHQFHSRDSQPITQRHTDIESRLQKMQDNAKELDESRRKKIELLEKKERDEEQFLEKERRDTARKWDNQGDFIRNMRKEIYSGDSVSLADRVNSSRHNMLRP.

Residues 25–60 are a coiled coil; that stretch reads KDEQAHKEEMKRVEQLRREIEEERQLLELHRLQEAA. Disordered stretches follow at residues 153 to 211 and 258 to 289; these read LMEK…DRNN and RTSR…ITQR. Residues 154–167 show a composition bias toward basic and acidic residues; that stretch reads MEKRKYSLDSDRKS. The span at 168–178 shows a compositional bias: basic residues; it reads KERRHRDRHHR. A compositionally biased stretch (basic and acidic residues) spans 179–199; it reads SNQDRSRERSDNEQHSSDKRE. S266 and S268 each carry phosphoserine. Residues 286–334 adopt a coiled-coil conformation; it reads ITQRHTDIESRLQKMQDNAKELDESRRKKIELLEKKERDEEQFLEKERR.

It belongs to the CWC25 family. Belongs to the 40S cdc5-associated complex (or cwf complex), a spliceosome sub-complex reminiscent of a late-stage spliceosome composed of the U2, U5 and U6 snRNAs and at least brr2, cdc5, cwf2/prp3, cwf3/syf1, cwf4/syf3, cwf5/ecm2, spp42/cwf6, cwf7/spf27, cwf8, cwf9, cwf10, cwf11, cwf12, prp45/cwf13, cwf14, cwf15, cwf16, cwf17, cwf18, cwf19, cwf20, cwf21, cwf22, cwf23, cwf24, cwf25, cwf26, cyp7/cwf27, cwf28, cwf29/ist3, lea1, msl1, prp5/cwf1, prp10, prp12/sap130, prp17, prp22, sap61, sap62, sap114, sap145, slu7, smb1, smd1, smd3, smf1, smg1 and syf2.

The protein resides in the nucleus. Functionally, involved in mRNA splicing. This chain is Pre-mRNA-splicing factor cwf25 (cwf25), found in Schizosaccharomyces pombe (strain 972 / ATCC 24843) (Fission yeast).